The sequence spans 510 residues: Calmodulin-binding receptor-like cytoplasmic kinase 3 (510 aa).

Positions 1-30 are cleaved as a signal peptide; the sequence is MGGDDLSFTRLVITALFGLLMLLQIKETSA. Over residues 166-178 the composition is skewed to polar residues; the sequence is VSSFEMSPSSEKI. The segment at 166–209 is disordered; sequence VSSFEMSPSSEKIPQSPFRAPPSPSRVPQSPSRYAMSPRPSRLG. A Phosphothreonine modification is found at Thr214. One can recognise a Protein kinase domain in the interval 225-499; it reads FADSHQIGEG…MEAVGKQLWA (275 aa). ATP is bound by residues 231–239 and Lys253; that span reads IGEGGFGVV. Residues 240–265 form a caM-binding region; it reads FKGVLDDGQVVAIKRAKKEHFENLRT. The active-site Proton acceptor is Asp350. Phosphoserine is present on Ser354. Residues Thr386 and Thr391 each carry the phosphothreonine modification. Tyr399 is modified (phosphotyrosine).

The protein belongs to the protein kinase superfamily. Ser/Thr protein kinase family. In terms of assembly, interacts with calmodulin (CaM) in a Ca(2+)-dependent manner.

It localises to the cytoplasm. The enzyme catalyses L-seryl-[protein] + ATP = O-phospho-L-seryl-[protein] + ADP + H(+). The catalysed reaction is L-threonyl-[protein] + ATP = O-phospho-L-threonyl-[protein] + ADP + H(+). The sequence is that of Calmodulin-binding receptor-like cytoplasmic kinase 3 (CRCK3) from Arabidopsis thaliana (Mouse-ear cress).